A 40-amino-acid chain; its full sequence is Spodomicin (40 aa).

Intrachain disulfides connect Cys-6-Cys-20, Cys-10-Cys-32, and Cys-21-Cys-39.

Monomer. Contains three disulfide bonds. As to expression, hemolymph.

Its subcellular location is the secreted. In terms of biological role, fungicide. The sequence is that of Spodomicin from Spodoptera littoralis (Egyptian cotton leafworm).